A 65-amino-acid polypeptide reads, in one-letter code: Large ribosomal subunit protein bL35 (65 aa).

It belongs to the bacterial ribosomal protein bL35 family.

This chain is Large ribosomal subunit protein bL35, found in Methylobacillus flagellatus (strain ATCC 51484 / DSM 6875 / VKM B-1610 / KT).